The primary structure comprises 702 residues: Polyribonucleotide nucleotidyltransferase (702 aa).

Asp491 and Asp497 together coordinate Mg(2+). The KH domain occupies 558-618 (PKMKTFMIPV…TAIEKAYQLI (61 aa)). The S1 motif domain occupies 628 to 696 (GEKIIGPVVK…GKGKIKLQLI (69 aa)).

The protein belongs to the polyribonucleotide nucleotidyltransferase family. The cofactor is Mg(2+).

The protein localises to the cytoplasm. The enzyme catalyses RNA(n+1) + phosphate = RNA(n) + a ribonucleoside 5'-diphosphate. Its function is as follows. Involved in mRNA degradation. Catalyzes the phosphorolysis of single-stranded polyribonucleotides processively in the 3'- to 5'-direction. The sequence is that of Polyribonucleotide nucleotidyltransferase from Spiroplasma citri.